Reading from the N-terminus, the 485-residue chain is ATP synthase subunit beta (485 aa).

158–165 provides a ligand contact to ATP; it reads GGAGVGKT.

It belongs to the ATPase alpha/beta chains family. F-type ATPases have 2 components, CF(1) - the catalytic core - and CF(0) - the membrane proton channel. CF(1) has five subunits: alpha(3), beta(3), gamma(1), delta(1), epsilon(1). CF(0) has four main subunits: a(1), b(1), b'(1) and c(9-12).

The protein resides in the cell inner membrane. It carries out the reaction ATP + H2O + 4 H(+)(in) = ADP + phosphate + 5 H(+)(out). Functionally, produces ATP from ADP in the presence of a proton gradient across the membrane. The catalytic sites are hosted primarily by the beta subunits. The chain is ATP synthase subunit beta from Erythrobacter litoralis (strain HTCC2594).